Reading from the N-terminus, the 143-residue chain is MGIAKEFREFAVKGNVIDLAVGVIIGGAFGKIVDSLVNDVIMPIVGLVFGRLDFSNLFLVLGSVPPGTPATLDALRKAGVPVLAHGSFITVAVNFLILAFIIFMMVKQINRLKRAAPPAPPATPAAPPEDIVLLREIRDSLRR.

Transmembrane regions (helical) follow at residues 10 to 30 (FAVK…GAFG), 40 to 60 (VIMP…LFLV), and 86 to 106 (GSFI…FMMV).

Belongs to the MscL family. In terms of assembly, homopentamer.

Its subcellular location is the cell inner membrane. Its function is as follows. Channel that opens in response to stretch forces in the membrane lipid bilayer. May participate in the regulation of osmotic pressure changes within the cell. The polypeptide is Large-conductance mechanosensitive channel (Paracidovorax citrulli (strain AAC00-1) (Acidovorax citrulli)).